Consider the following 61-residue polypeptide: Large ribosomal subunit protein eL29y (61 aa).

Residues M1 to E61 are disordered. Residues K15 to P31 are compositionally biased toward basic residues.

This sequence belongs to the eukaryotic ribosomal protein eL29 family.

The sequence is that of Large ribosomal subunit protein eL29y (RPL29B) from Arabidopsis thaliana (Mouse-ear cress).